The primary structure comprises 392 residues: MATFPHFGTAAIHVGQEPEQWDMNQVVPPISLSSTYKQDNPGEPKGHDYSRAGNPTRDVLQKNLAALEDAKHCQVFSSGLAATSAIINLLKYGDHIVCSDDVYGGTQRYIRRVAVPNHGLEVDSVDLTDVQNLEKAIKPNTKMVWFESPSNPLLKVVDIAAVVQTAKKANPEIVVVVDNTFMSPYFQRPISLGADVVVHSITKYINGHSDVVMGAVITDNDEFQQHLFFMQLAVGAVPSPFDCFLVNRGLKTLHIRMRAHYENALAVAKYLEANDRIESVLYPALPSHPQHEVHEKQTKGMSGMISFYLKGELQESRAFLSALKVFTLAESLGGYESLAELPSIMTHASVPAETRIVLGITDNLIRISVGIEDLDDLVADLDQALKIAIPKV.

Positions 32-55 (LSSTYKQDNPGEPKGHDYSRAGNP) are disordered. The segment covering 40–50 (NPGEPKGHDYS) has biased composition (basic and acidic residues). Residues Arg-51, Tyr-103, and Arg-108 each contribute to the substrate site. Lys-203 is modified (N6-(pyridoxal phosphate)lysine). Glu-330 is a binding site for substrate.

This sequence belongs to the trans-sulfuration enzymes family. Pyridoxal 5'-phosphate serves as cofactor.

It localises to the cytoplasm. It catalyses the reaction L,L-cystathionine + H2O = 2-oxobutanoate + L-cysteine + NH4(+). It participates in amino-acid biosynthesis; L-cysteine biosynthesis; L-cysteine from L-homocysteine and L-serine: step 2/2. The chain is Putative cystathionine gamma-lyase 2 (cth-2) from Caenorhabditis elegans.